Consider the following 144-residue polypeptide: 3-hydroxyacyl-[acyl-carrier-protein] dehydratase FabZ (144 aa).

The active site involves histidine 51.

This sequence belongs to the thioester dehydratase family. FabZ subfamily.

Its subcellular location is the cytoplasm. It catalyses the reaction a (3R)-hydroxyacyl-[ACP] = a (2E)-enoyl-[ACP] + H2O. In terms of biological role, involved in unsaturated fatty acids biosynthesis. Catalyzes the dehydration of short chain beta-hydroxyacyl-ACPs and long chain saturated and unsaturated beta-hydroxyacyl-ACPs. The protein is 3-hydroxyacyl-[acyl-carrier-protein] dehydratase FabZ of Lactococcus lactis subsp. cremoris (strain SK11).